A 245-amino-acid polypeptide reads, in one-letter code: Ribonuclease 3 (245 aa).

Residues Phe-17–Gly-146 form the RNase III domain. Glu-59 provides a ligand contact to Mg(2+). Asp-63 is a catalytic residue. 2 residues coordinate Mg(2+): Asp-132 and Glu-135. Glu-135 is an active-site residue. The region spanning Asp-172–Asn-241 is the DRBM domain.

Belongs to the ribonuclease III family. In terms of assembly, homodimer. It depends on Mg(2+) as a cofactor.

The protein localises to the cytoplasm. The enzyme catalyses Endonucleolytic cleavage to 5'-phosphomonoester.. Functionally, digests double-stranded RNA. Involved in the processing of primary rRNA transcript to yield the immediate precursors to the large and small rRNAs (23S and 16S). Processes some mRNAs, and tRNAs when they are encoded in the rRNA operon. Processes pre-crRNA and tracrRNA of type II CRISPR loci if present in the organism. This chain is Ribonuclease 3, found in Staphylococcus epidermidis (strain ATCC 35984 / DSM 28319 / BCRC 17069 / CCUG 31568 / BM 3577 / RP62A).